A 249-amino-acid chain; its full sequence is Phycobilisome 27.9 kDa linker polypeptide, phycoerythrin-associated, rod (249 aa).

The 165-residue stretch at 2-166 (ASQTILELWP…LDRGPAQIDS (165 aa)) folds into the PBS-linker domain. Positions 198–248 (EKRFKILVQGSKFDSPRRISTTEYIVPASKMTPQIQRINRTSGKIVSITEI) constitute a CpcD-like domain.

This sequence belongs to the phycobilisome linker protein family. The phycobilisome is a hemidiscoidal structure that is composed of two distinct substructures: a core complex and six rods radiating from the core.

The protein localises to the cellular thylakoid membrane. In terms of biological role, rod linker protein, associated with phycoerythrin. Linker polypeptides determine the state of aggregation and the location of the disk-shaped phycobiliprotein units within the phycobilisome and modulate their spectroscopic properties in order to mediate a directed and optimal energy transfer. This is Phycobilisome 27.9 kDa linker polypeptide, phycoerythrin-associated, rod (cpeD) from Microchaete diplosiphon (Fremyella diplosiphon).